We begin with the raw amino-acid sequence, 333 residues long: Glycerol-3-phosphate dehydrogenase [NAD(P)+] (333 aa).

NADPH-binding residues include S10, W11, H31, R32, and K105. Residues K105, G136, and S138 each contribute to the sn-glycerol 3-phosphate site. A140 provides a ligand contact to NADPH. Sn-glycerol 3-phosphate contacts are provided by K191, D244, S254, R255, and N256. K191 functions as the Proton acceptor in the catalytic mechanism. R255 is an NADPH binding site. The NADPH site is built by I279 and E281.

The protein belongs to the NAD-dependent glycerol-3-phosphate dehydrogenase family.

The protein localises to the cytoplasm. It carries out the reaction sn-glycerol 3-phosphate + NAD(+) = dihydroxyacetone phosphate + NADH + H(+). The enzyme catalyses sn-glycerol 3-phosphate + NADP(+) = dihydroxyacetone phosphate + NADPH + H(+). Its pathway is membrane lipid metabolism; glycerophospholipid metabolism. Its function is as follows. Catalyzes the reduction of the glycolytic intermediate dihydroxyacetone phosphate (DHAP) to sn-glycerol 3-phosphate (G3P), the key precursor for phospholipid synthesis. This Chlorobium luteolum (strain DSM 273 / BCRC 81028 / 2530) (Pelodictyon luteolum) protein is Glycerol-3-phosphate dehydrogenase [NAD(P)+].